The sequence spans 342 residues: MRVISRARSACTWTSCTSLSPCSTSCPPSPAAPTLLRRRSLPQQRRRPSSSPNRRVRGVTTSPCPTRSLVYKRRVGAPQRLCAETVATMQAQEANALLLSRMEALEWFKKFTVWLRVYAIFIFQLAFSFGLGSVFWLGFPQNRNFCVENYSFFLTVLVPIVCMFITYTLGNEHPSNATVLFIYLLANSLTAAIFQMCSESRVLVGSYVMTLALFISFTGLAFLGGRDRRRWKCISCVYVVMLLSFLTLALLSDADWLQKIVVTLCAFSISFFLGILAYDSLMVIFFCPPNQCIRHAVCLYLDSMAIFLTLLLMLSGPRWISLSDGAPLDNGTLTAASTTGKS.

The tract at residues 21–64 (PCSTSCPPSPAAPTLLRRRSLPQQRRRPSSSPNRRVRGVTTSPC) is disordered. Residues 36–48 (LRRRSLPQQRRRP) are compositionally biased toward basic residues. Residues 119–139 (AIFIFQLAFSFGLGSVFWLGF) traverse the membrane as a helical segment. Asparagine 149 is a glycosylation site (N-linked (GlcNAc...) asparagine; by host). The chain crosses the membrane as a helical span at residues 150 to 170 (YSFFLTVLVPIVCMFITYTLG). Residue asparagine 176 is glycosylated (N-linked (GlcNAc...) asparagine; by host). Helical transmembrane passes span 177-197 (ATVL…FQMC), 202-222 (VLVG…GLAF), 231-251 (WKCI…LALL), 266-286 (AFSI…VIFF), and 296-316 (AVCL…MLSG). An N-linked (GlcNAc...) asparagine; by host glycan is attached at asparagine 330.

The protein belongs to the cytomegalovirus US12 family.

The protein resides in the membrane. In Homo sapiens (Human), this protein is Transmembrane protein HWLF3 (US20).